Reading from the N-terminus, the 169-residue chain is MQFNKRIDANQLDMKEQVVDIRRVTKVVKGGRNFRFAALVVVGDENGHVGVGTGKAMEIPDAIRKGIQAAKKNLLLVPTVGTTVPHEVIGHFGAGNVLIMPAKEGTGIIAGGPVRAVLELAGIKDVRAKSLGTNNSRNMVSATMDGLRQLKRAEDVAKLRGKSVEELLG.

The region spanning 14-77 is the S5 DRBM domain; the sequence is MKEQVVDIRR…QAAKKNLLLV (64 aa).

It belongs to the universal ribosomal protein uS5 family. As to quaternary structure, part of the 30S ribosomal subunit. Contacts proteins S4 and S8.

In terms of biological role, with S4 and S12 plays an important role in translational accuracy. Its function is as follows. Located at the back of the 30S subunit body where it stabilizes the conformation of the head with respect to the body. The polypeptide is Small ribosomal subunit protein uS5 (Alkaliphilus metalliredigens (strain QYMF)).